The following is a 205-amino-acid chain: dITP/XTP pyrophosphatase (205 aa).

Ser8–Lys13 serves as a coordination point for substrate. Asp69 functions as the Proton acceptor in the catalytic mechanism. Asp69 lines the Mg(2+) pocket. Substrate is bound by residues Ser70, His153–Asp156, Lys176, and His181–Arg182.

This sequence belongs to the HAM1 NTPase family. In terms of assembly, homodimer. The cofactor is Mg(2+).

The catalysed reaction is XTP + H2O = XMP + diphosphate + H(+). The enzyme catalyses dITP + H2O = dIMP + diphosphate + H(+). It catalyses the reaction ITP + H2O = IMP + diphosphate + H(+). Its function is as follows. Pyrophosphatase that catalyzes the hydrolysis of nucleoside triphosphates to their monophosphate derivatives, with a high preference for the non-canonical purine nucleotides XTP (xanthosine triphosphate), dITP (deoxyinosine triphosphate) and ITP. Seems to function as a house-cleaning enzyme that removes non-canonical purine nucleotides from the nucleotide pool, thus preventing their incorporation into DNA/RNA and avoiding chromosomal lesions. The polypeptide is dITP/XTP pyrophosphatase (Shewanella oneidensis (strain ATCC 700550 / JCM 31522 / CIP 106686 / LMG 19005 / NCIMB 14063 / MR-1)).